The primary structure comprises 1328 residues: WASH complex subunit 2 (1328 aa).

Residues 1–219 (MNRTSPDSEQ…VGSDRGSIVD (219 aa)) form a sufficient for interaction with WASHC3, WASHC4 and WASHC5; required for interaction with WASHC1 region. Ser157, Ser159, Ser204, Ser205, and Ser209 each carry phosphoserine. Residues 201 to 213 (GELSSEEGSVGSD) show a composition bias toward low complexity. 2 disordered regions span residues 201–655 (GELS…KTNL) and 675–830 (KKTQ…PKST). Acidic residues-rich tracts occupy residues 219-231 (DSEDEKEEEESDD) and 248-273 (SDEEEDDDADLFADSEKEGDDIEDIE). At Ser283 the chain carries Phosphoserine. Over residues 288–323 (LAARIKGDVSNQRKEGHTDGKPQRTVKEKKERRTPA) the composition is skewed to basic and acidic residues. Position 321 is a phosphothreonine (Thr321). Residues 346–592 (SRGGLFSDRQ…QTSSLPPQSQ (247 aa)) form a sufficient for interaction with CCDC93 region. The segment at 347-1328 (RGGLFSDRQG…DDPLNAFGSQ (982 aa)) is interaction with VPS35. Positions 357 to 367 (LFDDDDESDLF) match the LFa 1 motif. Ser384 and Ser387 each carry phosphoserine. Short sequence motifs (LFa) lie at residues 440 to 455 (LFDDDDNDSDEDDNFF) and 474 to 483 (IFDDDEGDLF). Acidic residues predominate over residues 441-453 (FDDDDNDSDEDDN). Polar residues predominate over residues 508-528 (TITLPSSKNPKLVSETKTQKG). 2 consecutive short sequence motifs (LFa) follow at residues 529 to 540 (LFSDEEDSEDLF) and 564 to 575 (LFGDEDEEDNLF). Phosphoserine is present on residues Ser531 and Ser536. Residues 539–556 (LFSSQSSSKTKSASVLSS) are compositionally biased toward low complexity. Polar residues predominate over residues 582-592 (KQTSSLPPQSQ). Residues Ser610 and Ser611 each carry the phosphoserine modification. Positions 627–638 (ASERKSKGERWD) are enriched in basic and acidic residues. 2 consecutive short sequence motifs (LFa) follow at residues 655–667 (LFEEEDDDGVDLF) and 683–695 (LFEDDTDSGSSLF). Over residues 690–699 (SGSSLFSLPP) the composition is skewed to polar residues. Phosphoserine occurs at positions 720, 744, 749, 780, and 795. Residues 797–808 (FDEDEDKVEDDS) show a composition bias toward acidic residues. Short sequence motifs (LFa) lie at residues 832-840 (VFQDEELLF) and 849-855 (DPDVDLF). 2 disordered regions span residues 863–940 (LSMP…EPSS) and 991–1088 (PTLP…AMAV). Phosphoserine is present on residues Ser867 and Ser870. The short motif at 871–881 (LFGDDDDDDLF) is the LFa 10 element. Positions 894 to 919 (PEKKGTLRKDHKPPELTEGSKEKSTW) are enriched in basic and acidic residues. The segment at 925-1328 (QDSSGLTPFK…DDPLNAFGSQ (404 aa)) is interaction with phospholipids. A compositionally biased stretch (basic residues) spans 1016 to 1034 (NKGRVKVRGKRRPQTRAAR). Positions 1017 to 1035 (KGRVKVRGKRRPQTRAARR) are required for interaction with F-actin-capping protein subunit alpha (CAPZA1 or CAPZA2 or CAPZA3). A phosphoserine mark is found at Ser1042, Ser1060, Ser1077, and Ser1102. A disordered region spans residues 1115–1210 (AHLFDSGDIF…KKNQWKSDSH (96 aa)). Short sequence motifs (LFa) lie at residues 1117-1124 (LFDSGDIF), 1157-1171 (VFPDLSEASGVDDLF), and 1187-1195 (LLEDEEDLF). A phosphoserine mark is found at Ser1162 and Ser1165. The span at 1196-1210 (ADQKGKKNQWKSDSH) shows a compositional bias: basic and acidic residues. Short sequence motifs (LFa) lie at residues 1220–1226 (IFEDDIF), 1249–1257 (LFDDNIDIF), and 1277–1286 (MFDDDTDDIF). Positions 1289 to 1310 (GLQAKASKPKSQSAEAVSELRS) are disordered. An LFa 17 motif is present at residues 1317 to 1325 (IFDDPLNAF). Ser1327 carries the post-translational modification Phosphoserine.

This sequence belongs to the FAM21 family. As to quaternary structure, component of the WASH core complex also described as WASH regulatory complex (SHRC) composed of WASHC1, WASHC2, WASHC3, WASHC4 and WASHC5; in the complex interacts (via N-terminus) directly with WASHC1. The WASH core complex associates with the F-actin-capping protein dimer (formed by CAPZA1, CAPZA2 or CAPZA3 and CAPZB) in a transient or substoichiometric manner which was initially described as WASH complex. Interacts with VPS35; mediates the association with the retromer CSC complex. Interacts with FKBP15. Interacts with CCDC93, CCDC22, VPS35L; indicative for an association of the WASH core complex with the CCC and retriever complexes. Directly interacts with TBC1D23.

It localises to the early endosome membrane. The protein resides in the cell membrane. Acts as a component of the WASH core complex that functions as a nucleation-promoting factor (NPF) at the surface of endosomes, where it recruits and activates the Arp2/3 complex to induce actin polymerization, playing a key role in the fission of tubules that serve as transport intermediates during endosome sorting. Mediates the recruitment of the WASH core complex to endosome membranes via binding to phospholipids and VPS35 of the retromer CSC. Mediates the recruitment of the F-actin-capping protein dimer to the WASH core complex probably promoting localized F-actin polymerization needed for vesicle scission. Via its C-terminus binds various phospholipids, most strongly phosphatidylinositol 4-phosphate (PtdIns-(4)P), phosphatidylinositol 5-phosphate (PtdIns-(5)P) and phosphatidylinositol 3,5-bisphosphate (PtdIns-(3,5)P2). Involved in the endosome-to-plasma membrane trafficking and recycling of SNX27-retromer-dependent cargo proteins, such as GLUT1. Required for the association of DNAJC13, ENTR1, ANKRD50 with retromer CSC subunit VPS35. Required for the endosomal recruitment of CCC and retriever complexes subunits COMMD1 and CCDC93 as well as the retrievere complex subunit VPS35L. The polypeptide is WASH complex subunit 2 (Rattus norvegicus (Rat)).